A 314-amino-acid polypeptide reads, in one-letter code: DNA-directed RNA polymerase subunit alpha (314 aa).

The alpha N-terminal domain (alpha-NTD) stretch occupies residues 1-228 (MIEIEKPKIE…EHLNIFVGLT (228 aa)). The interval 245–314 (KEKVLEMTIE…ELGLSLRKDD (70 aa)) is alpha C-terminal domain (alpha-CTD).

Belongs to the RNA polymerase alpha chain family. Homodimer. The RNAP catalytic core consists of 2 alpha, 1 beta, 1 beta' and 1 omega subunit. When a sigma factor is associated with the core the holoenzyme is formed, which can initiate transcription.

The enzyme catalyses RNA(n) + a ribonucleoside 5'-triphosphate = RNA(n+1) + diphosphate. Its function is as follows. DNA-dependent RNA polymerase catalyzes the transcription of DNA into RNA using the four ribonucleoside triphosphates as substrates. The polypeptide is DNA-directed RNA polymerase subunit alpha (Geobacillus thermodenitrificans (strain NG80-2)).